The chain runs to 881 residues: Dynamin-like GTPase MGM1, mitochondrial (881 aa).

The N-terminal 59 residues, 1–59 (MNASPVRLLILRRQLATHPAILYSSPYIKSPLVHLHSRMSNVHRSAHANALSFVITRRS), are a transit peptide targeting the mitochondrion. The Mitochondrial matrix segment spans residues 60 to 72 (ISHFPKIISKIIR). The helical; Signal-anchor for type II membrane protein transmembrane segment at 73 to 92 (LPIYVGGGMAAAGSYIAYKM) threads the bilayer. At 93–881 (EEASSFTKDK…KSYKGVSKNL (789 aa)) the chain is on the mitochondrial intermembrane side. Residues 145 to 183 (ATSLDDDESKRQGDPKDDDDEDDDDEDDENDSVDTTQDE) are disordered. Acidic residues predominate over residues 160–176 (KDDDDEDDDDEDDENDS). The Dynamin-type G domain maps to 207–505 (HLTLPSIVVI…LEISMSNALE (299 aa)). Residues 217–224 (GSQSSGKS) are G1 motif. GTP contacts are provided by Ser-220, Ser-221, Gly-222, Lys-223, Ser-224, Ser-225, and Gly-239. Ser-224 contributes to the Mg(2+) binding site. A G2 motif region spans residues 243–245 (VTR). The Mg(2+) site is built by Thr-244 and Asp-317. A G3 motif region spans residues 317-320 (DLPG). Residues 385-388 (TKLD) form a G4 motif region. GTP contacts are provided by Lys-386, Asp-388, and Thr-415. The interval 414-417 (ITKT) is G5 motif. A paddle region region spans residues 668-780 (STADQVENCI…KMLKNKCHST (113 aa)). Residues Cys-777 and Cys-786 are joined by a disulfide bond. The 93-residue stretch at 780 to 872 (TIEKDRCPEV…KIDSILVFKK (93 aa)) folds into the GED domain.

It belongs to the TRAFAC class dynamin-like GTPase superfamily. Dynamin/Fzo/YdjA family. In terms of assembly, oligomeric complex consisting of membrane-bound and soluble forms of MGM1. Associates with FZO1 through interaction with the intermembrane space domain of UGO1 which binds FZO1 through its cytoplasmic domain. Cleavage of the transit peptide by mitochondrial processing protease (MPP) produces a long integral membrane form of MGM1 (l-MGM1). Further processing by the rhomboid protease PCP1 produces a short peripheral membrane form of MGM1 (s-MGM1). Both isoforms are required for full activity.

It localises to the mitochondrion inner membrane. It is found in the mitochondrion intermembrane space. It carries out the reaction GTP + H2O = GDP + phosphate + H(+). Its function is as follows. Dynamin-related GTPase that is essential for normal mitochondrial morphology by mediating fusion of the mitochondrial inner membranes, regulating cristae morphology and maintaining respiratory chain function. Exists in two forms: the transmembrane, long form (Dynamin-like GTPase MGM1, long form; L-MGM1), which is tethered to the inner mitochondrial membrane, and the short soluble form (Dynamin-like GTPase MGM1, short form; S-MGM1), which results from proteolytic cleavage and localizes in the intermembrane space. Both forms (L-MGM1 and S-MGM1) cooperate to catalyze the fusion of the mitochondrial inner membrane. The equilibrium between L-MGM1 and S-MGM1 is essential: excess levels of S-MGM1, following loss of mitochondrial membrane potential, lead to an impaired equilibrium between L-MGM1 and S-MGM1, inhibiting mitochondrial fusion. Plays a role in the maintenance and remodeling of mitochondrial cristae, some invaginations of the mitochondrial inner membrane that provide an increase in the surface area. Probably acts by forming helical filaments at the inside of inner membrane tubes with the shape and dimensions of crista junctions. Functionally, constitutes the transmembrane long form (L-MGM1) that plays a central role in mitochondrial inner membrane fusion and cristae morphology. L-MGM1 and the soluble short form (S-MGM1) form higher-order helical assemblies that coordinate the fusion of mitochondrial inner membranes. Inner membrane-anchored L-MGM1 molecules initiate membrane remodeling by recruiting soluble S-MGM1 to rapidly polymerize into a flexible cylindrical scaffold encaging the mitochondrial inner membrane. Once at the membrane surface, the formation of S-MGM1 helices induce bilayer curvature. MGM1 dimerization through the paddle region, which inserts into cardiolipin-containing membrane, promotes GTP hydrolysis and the helical assembly of a flexible MGM1 lattice on the membrane, which drives membrane curvature and mitochondrial fusion. Constitutes the soluble short form (S-MGM1) generated by cleavage by PCP1, which plays a central role in mitochondrial inner membrane fusion and cristae morphology. The transmembrane long form (L-MGM1) and the S-MGM1 form higher-order helical assemblies that coordinate the fusion of mitochondrial inner membranes. Inner membrane-anchored L-MGM1 molecules initiate membrane remodeling by recruiting soluble S-MGM1 to rapidly polymerize into a flexible cylindrical scaffold encaging the mitochondrial inner membrane. Once at the membrane surface, the formation of S-MGM1 helices induce bilayer curvature. MGM1 dimerization through the paddle region, which inserts into cardiolipin-containing membrane, promotes GTP hydrolysis and the helical assembly of a flexible MGM1 lattice on the membrane, which drives membrane curvature and mitochondrial fusion. Excess levels of S-MGM1 produced by cleavage by PCP1 following stress conditions that induce loss of mitochondrial membrane potential, lead to an impaired equilibrium between L-MGM1 and S-MGM1, thereby inhibiting mitochondrial fusion. This chain is Dynamin-like GTPase MGM1, mitochondrial, found in Saccharomyces cerevisiae (strain ATCC 204508 / S288c) (Baker's yeast).